The sequence spans 80 residues: UPF0057 membrane protein ZK632.10 (80 aa).

2 consecutive transmembrane segments (helical) span residues 4–24 (ILLA…DVGC) and 32–52 (ILLT…IILC).

Belongs to the UPF0057 (PMP3) family.

It is found in the membrane. The polypeptide is UPF0057 membrane protein ZK632.10 (Caenorhabditis elegans).